We begin with the raw amino-acid sequence, 407 residues long: Carbamoyl phosphate synthase small chain (407 aa).

The tract at residues 1-205 (MTETTSKTAP…LADGYGEQDT (205 aa)) is CPSase. L-glutamine is bound by residues S60, G257, and G259. The Glutamine amidotransferase type-1 domain occupies 209 to 397 (HVVALDFGVK…INLIREKKGE (189 aa)). C286 serves as the catalytic Nucleophile. L-glutamine contacts are provided by L287, Q290, N328, G330, and F331. Active-site residues include H370 and E372.

This sequence belongs to the CarA family. Composed of two chains; the small (or glutamine) chain promotes the hydrolysis of glutamine to ammonia, which is used by the large (or ammonia) chain to synthesize carbamoyl phosphate. Tetramer of heterodimers (alpha,beta)4.

The catalysed reaction is hydrogencarbonate + L-glutamine + 2 ATP + H2O = carbamoyl phosphate + L-glutamate + 2 ADP + phosphate + 2 H(+). The enzyme catalyses L-glutamine + H2O = L-glutamate + NH4(+). It participates in amino-acid biosynthesis; L-arginine biosynthesis; carbamoyl phosphate from bicarbonate: step 1/1. It functions in the pathway pyrimidine metabolism; UMP biosynthesis via de novo pathway; (S)-dihydroorotate from bicarbonate: step 1/3. Its function is as follows. Small subunit of the glutamine-dependent carbamoyl phosphate synthetase (CPSase). CPSase catalyzes the formation of carbamoyl phosphate from the ammonia moiety of glutamine, carbonate, and phosphate donated by ATP, constituting the first step of 2 biosynthetic pathways, one leading to arginine and/or urea and the other to pyrimidine nucleotides. The small subunit (glutamine amidotransferase) binds and cleaves glutamine to supply the large subunit with the substrate ammonia. This Brucella anthropi (strain ATCC 49188 / DSM 6882 / CCUG 24695 / JCM 21032 / LMG 3331 / NBRC 15819 / NCTC 12168 / Alc 37) (Ochrobactrum anthropi) protein is Carbamoyl phosphate synthase small chain.